The sequence spans 375 residues: tRNA-specific 2-thiouridylase MnmA (375 aa).

ATP-binding positions include 12–19 and Met38; that span reads GMSGGVDS. The segment at 98–100 is interaction with target base in tRNA; that stretch reads NPD. Cys103 serves as the catalytic Nucleophile. A disulfide bridge connects residues Cys103 and Cys200. Position 127 (Gly127) interacts with ATP. The interval 150-152 is interaction with tRNA; it reads KDQ. Residue Cys200 is the Cysteine persulfide intermediate of the active site. Residues 312–313 are interaction with tRNA; sequence RY.

Belongs to the MnmA/TRMU family.

It is found in the cytoplasm. It carries out the reaction S-sulfanyl-L-cysteinyl-[protein] + uridine(34) in tRNA + AH2 + ATP = 2-thiouridine(34) in tRNA + L-cysteinyl-[protein] + A + AMP + diphosphate + H(+). Catalyzes the 2-thiolation of uridine at the wobble position (U34) of tRNA, leading to the formation of s(2)U34. This Lactobacillus delbrueckii subsp. bulgaricus (strain ATCC BAA-365 / Lb-18) protein is tRNA-specific 2-thiouridylase MnmA.